Consider the following 199-residue polypeptide: Probable GTP-binding protein EngB (199 aa).

Residues 25 to 199 (IGMEVAFVGY…LKRVLNNWLR (175 aa)) enclose the EngB-type G domain. Serine 40 and threonine 62 together coordinate Mg(2+).

It belongs to the TRAFAC class TrmE-Era-EngA-EngB-Septin-like GTPase superfamily. EngB GTPase family. It depends on Mg(2+) as a cofactor.

Necessary for normal cell division and for the maintenance of normal septation. In Blochmanniella pennsylvanica (strain BPEN), this protein is Probable GTP-binding protein EngB.